We begin with the raw amino-acid sequence, 328 residues long: Ferredoxin--NADP reductase 2 (328 aa).

8 residues coordinate FAD: threonine 16, glutamate 35, glutamine 43, tyrosine 48, isoleucine 88, phenylalanine 123, aspartate 284, and threonine 325.

Belongs to the ferredoxin--NADP reductase type 2 family. In terms of assembly, homodimer. FAD serves as cofactor.

The catalysed reaction is 2 reduced [2Fe-2S]-[ferredoxin] + NADP(+) + H(+) = 2 oxidized [2Fe-2S]-[ferredoxin] + NADPH. The chain is Ferredoxin--NADP reductase 2 from Oceanobacillus iheyensis (strain DSM 14371 / CIP 107618 / JCM 11309 / KCTC 3954 / HTE831).